Consider the following 903-residue polypeptide: Alanine--tRNA ligase (903 aa).

Residues histidine 591, histidine 595, cysteine 695, and histidine 699 each coordinate Zn(2+).

The protein belongs to the class-II aminoacyl-tRNA synthetase family. The cofactor is Zn(2+).

It is found in the cytoplasm. The catalysed reaction is tRNA(Ala) + L-alanine + ATP = L-alanyl-tRNA(Ala) + AMP + diphosphate. Catalyzes the attachment of alanine to tRNA(Ala) in a two-step reaction: alanine is first activated by ATP to form Ala-AMP and then transferred to the acceptor end of tRNA(Ala). Also edits incorrectly charged Ser-tRNA(Ala) and Gly-tRNA(Ala) via its editing domain. The polypeptide is Alanine--tRNA ligase (Methanosphaera stadtmanae (strain ATCC 43021 / DSM 3091 / JCM 11832 / MCB-3)).